Reading from the N-terminus, the 307-residue chain is Thymidylate synthase (307 aa).

Residues R26 and 160–161 (RR) contribute to the dUMP site. C180 serves as the catalytic Nucleophile. DUMP is bound by residues 209-212 (RSCD), N220, and 250-252 (HIY). D212 serves as a coordination point for (6R)-5,10-methylene-5,6,7,8-tetrahydrofolate. Position 306 (A306) interacts with (6R)-5,10-methylene-5,6,7,8-tetrahydrofolate.

It belongs to the thymidylate synthase family. Bacterial-type ThyA subfamily. As to quaternary structure, homodimer.

It localises to the cytoplasm. The catalysed reaction is dUMP + (6R)-5,10-methylene-5,6,7,8-tetrahydrofolate = 7,8-dihydrofolate + dTMP. It functions in the pathway pyrimidine metabolism; dTTP biosynthesis. Its function is as follows. Catalyzes the reductive methylation of 2'-deoxyuridine-5'-monophosphate (dUMP) to 2'-deoxythymidine-5'-monophosphate (dTMP) while utilizing 5,10-methylenetetrahydrofolate (mTHF) as the methyl donor and reductant in the reaction, yielding dihydrofolate (DHF) as a by-product. This enzymatic reaction provides an intracellular de novo source of dTMP, an essential precursor for DNA biosynthesis. In Rhizobium rhizogenes (strain K84 / ATCC BAA-868) (Agrobacterium radiobacter), this protein is Thymidylate synthase.